A 396-amino-acid chain; its full sequence is Orotidine 5'-phosphate decarboxylase (396 aa).

Residues Asp-46, Lys-68 to His-70, Asp-103 to Thr-112, Tyr-346, and Arg-365 contribute to the substrate site. Catalysis depends on Lys-105, which acts as the Proton donor.

The protein belongs to the OMP decarboxylase family.

It catalyses the reaction orotidine 5'-phosphate + H(+) = UMP + CO2. The protein operates within pyrimidine metabolism; UMP biosynthesis via de novo pathway; UMP from orotate: step 2/2. The chain is Orotidine 5'-phosphate decarboxylase (URA3) from Sordaria macrospora (strain ATCC MYA-333 / DSM 997 / K(L3346) / K-hell).